The following is a 298-amino-acid chain: MVTKPDWLRVKAPQRERVGAVKDILRDLALNTVCEEASCPNIGECFKAGTATFLIMGPACTRACPYCDIDFEKYPKALDPTEPERLAQAVRRMGLRHVVITSVNRDDLADGGALQFARCIEAVRRVMPQTTIEVLIPDFCGSEAALDIVIAAHPQVINHNTETVPRLYRRVRPQGDYGRTLQLLERVRAKASHIYTKSGLMAGLGESEAEVLAVMADLRAVYCDILTIGQYLQPTPKHLKVEAFVEPALFERWRRAGEGMGFLQMVSSPLTRSSYHAEQVQRLMRSHPRTPKNQHSPE.

7 residues coordinate [4Fe-4S] cluster: Cys-34, Cys-39, Cys-45, Cys-60, Cys-64, Cys-67, and Ser-274. Positions 46–263 (FKAGTATFLI…RRAGEGMGFL (218 aa)) constitute a Radical SAM core domain. The disordered stretch occupies residues 277-298 (AEQVQRLMRSHPRTPKNQHSPE).

It belongs to the radical SAM superfamily. Lipoyl synthase family. [4Fe-4S] cluster serves as cofactor.

Its subcellular location is the cytoplasm. It carries out the reaction [[Fe-S] cluster scaffold protein carrying a second [4Fe-4S](2+) cluster] + N(6)-octanoyl-L-lysyl-[protein] + 2 oxidized [2Fe-2S]-[ferredoxin] + 2 S-adenosyl-L-methionine + 4 H(+) = [[Fe-S] cluster scaffold protein] + N(6)-[(R)-dihydrolipoyl]-L-lysyl-[protein] + 4 Fe(3+) + 2 hydrogen sulfide + 2 5'-deoxyadenosine + 2 L-methionine + 2 reduced [2Fe-2S]-[ferredoxin]. It functions in the pathway protein modification; protein lipoylation via endogenous pathway; protein N(6)-(lipoyl)lysine from octanoyl-[acyl-carrier-protein]: step 2/2. Catalyzes the radical-mediated insertion of two sulfur atoms into the C-6 and C-8 positions of the octanoyl moiety bound to the lipoyl domains of lipoate-dependent enzymes, thereby converting the octanoylated domains into lipoylated derivatives. The sequence is that of Lipoyl synthase 1 from Gloeobacter violaceus (strain ATCC 29082 / PCC 7421).